Reading from the N-terminus, the 351-residue chain is Protein RecA (351 aa).

68–75 (GPESSGKT) is an ATP binding site.

Belongs to the RecA family.

The protein localises to the cytoplasm. Its function is as follows. Can catalyze the hydrolysis of ATP in the presence of single-stranded DNA, the ATP-dependent uptake of single-stranded DNA by duplex DNA, and the ATP-dependent hybridization of homologous single-stranded DNAs. It interacts with LexA causing its activation and leading to its autocatalytic cleavage. The chain is Protein RecA from Chloroflexus aggregans (strain MD-66 / DSM 9485).